The sequence spans 490 residues: 2,3-bisphosphoglycerate-independent phosphoglycerate mutase (490 aa).

The Mn(2+) site is built by aspartate 9 and serine 59. The Phosphoserine intermediate role is filled by serine 59. Substrate contacts are provided by residues histidine 116, 145-146 (RD), arginine 175, arginine 181, 246-249 (RSDR), and lysine 319. Mn(2+) is bound by residues aspartate 385, histidine 389, aspartate 426, histidine 427, and histidine 444.

The protein belongs to the BPG-independent phosphoglycerate mutase family. In terms of assembly, monomer. Requires Mn(2+) as cofactor.

It carries out the reaction (2R)-2-phosphoglycerate = (2R)-3-phosphoglycerate. It functions in the pathway carbohydrate degradation; glycolysis; pyruvate from D-glyceraldehyde 3-phosphate: step 3/5. Catalyzes the interconversion of 2-phosphoglycerate and 3-phosphoglycerate. In Helicobacter hepaticus (strain ATCC 51449 / 3B1), this protein is 2,3-bisphosphoglycerate-independent phosphoglycerate mutase.